A 954-amino-acid polypeptide reads, in one-letter code: MTDRIELTTANEFIARHIGPRAADELAMLQTLGFDSIEALSESVIPESIKGTSVLNLPAGQSEADALASIKAIASKNQLFKTYIGQGYYNTHTPAPILRNLLENPAWYTAYTPYQPEISQGRLESLLNFQTLISDLTGLPIANASLLDEATAAAEAMTFCKRLSKNKASQQFFASSHCHPQTLDVLRTRAEPLGITVVVADEHELGDVSDYFGALLQYPASNGDVFDYRELVERFHAANALVAVAADLLALTLLTPPGEFGADVAIGSAQRFGVPLGFGGPHAAYFSTRDAFKRDMPGRLVGVSVDRHGKQALRLAMQTREQHIRREKATSNICTAQVLLANIASMYAVYHGPRGLTQIANRVHQLTAILAEGLSTLGLNAEQAFFFDSLTLHTGDRTAALHAAARARHINLREIDDQRLGLSLDETTSQSAVETLWAIFANDGQSLPDFAALADSVQSRLPAGLLRQSAILSHPVFNRYHSETELMRYLRKLADKDLALDRTMIPLGSCTMKLNAASEMIPVTWAEFGNLHPFAPAEQSAGYQQLTDELEAMLCAATGYDAISLQPNAGSQGEYAGLLAIRAYHQSRGDEHRDICLIPSSAHGTNPATANMAGMRVVVTACDARGNVDIEDLRAKAVQHRDQLAAIMITYPSTHGVFEEGIREICGIVHDNGGQVYIDGANMNAMVGLCAPGKFGGDVSHLNLHKTFCIPHGGGGPGVGPIGVKSHLAPFMPGHARMERKEGAVCAAPFGSASILPITWMYIRMMGGEGLKRASQLAILNANYISRRLEEHYPVLYTGSNGLVAHECILDLRPIKDSSGISVDDVAKRLIDFGFHAPTMSFPVAGTLMIEPTESESREELDRFCDAMIKIREEIRAVENGTLDKDDNPLKNAPHTAAEIVGQWSHPYSREQAVYPVDSLIENKYWPPVGRVDNVFGDRNLVCACPSIENYQEA.

Lys-706 carries the post-translational modification N6-(pyridoxal phosphate)lysine.

This sequence belongs to the GcvP family. As to quaternary structure, the glycine cleavage system is composed of four proteins: P, T, L and H. Pyridoxal 5'-phosphate serves as cofactor.

The enzyme catalyses N(6)-[(R)-lipoyl]-L-lysyl-[glycine-cleavage complex H protein] + glycine + H(+) = N(6)-[(R)-S(8)-aminomethyldihydrolipoyl]-L-lysyl-[glycine-cleavage complex H protein] + CO2. In terms of biological role, the glycine cleavage system catalyzes the degradation of glycine. The P protein binds the alpha-amino group of glycine through its pyridoxal phosphate cofactor; CO(2) is released and the remaining methylamine moiety is then transferred to the lipoamide cofactor of the H protein. The protein is Glycine dehydrogenase (decarboxylating) of Pseudomonas syringae pv. syringae (strain B728a).